The following is an 832-amino-acid chain: Disintegrin and metalloproteinase domain-containing protein 23 (832 aa).

The segment covering 1–10 has biased composition (polar residues); that stretch reads MKPPGSSSRQ. Residues 1-37 form a disordered region; that stretch reads MKPPGSSSRQPPLAGCSLAGASCGPQRGPAGSVPASA. A signal peptide spans 1–59; sequence MKPPGSSSRQPPLAGCSLAGASCGPQRGPAGSVPASAPARTPPCRLLLVLLLLPPLAAS. Residues 28-37 are compositionally biased toward low complexity; that stretch reads GPAGSVPASA. Residues 60 to 286 constitute a propeptide that is removed on maturation; the sequence is SRPRAWGAAA…ELQWLKRRKR (227 aa). Asparagine 76, asparagine 96, asparagine 100, and asparagine 263 each carry an N-linked (GlcNAc...) asparagine glycan. The Extracellular portion of the chain corresponds to 287-792; sequence AVNPSRGIFE…EGPKGPSATN (506 aa). The 198-residue stretch at 299–496 folds into the Peptidase M12B domain; sequence KYLELMIVND…GGGACLFNRP (198 aa). Intrachain disulfides connect cysteine 408–cysteine 491, cysteine 450–cysteine 475, and cysteine 452–cysteine 459. Residues 502–588 enclose the Disintegrin domain; that stretch reads PTECGNGYVE…QCPPNLHKQD (87 aa). Asparagine 547 and asparagine 548 each carry an N-linked (GlcNAc...) asparagine glycan. Cysteine 560 and cysteine 580 form a disulfide bridge. Positions 563–568 are may bind the integrin receptor; sequence AVNECD. Asparagine 664 and asparagine 732 each carry an N-linked (GlcNAc...) asparagine glycan. One can recognise an EGF-like domain in the interval 732–769; that stretch reads NMSSCPLDSKGKVCSGHGVCSNEATCICDFTWAGTDCS. 3 disulfide bridges follow: cysteine 736–cysteine 751, cysteine 745–cysteine 757, and cysteine 759–cysteine 768. Residues 793–813 traverse the membrane as a helical segment; that stretch reads LIIGSIAGAILVAAIVLGGTG. Topologically, residues 814 to 832 are cytoplasmic; the sequence is WGFKNVKKRRFDPTQQGPI.

In terms of assembly, can bind to LGI1 and LGI4. Ligand for integrin alpha-V/beta-3. Highly expressed in the brain and weakly expressed in the heart. In the brain, expressed prominently in the amygdala, caudate nucleus, hypothalamus, thalamus, cerebral cortex and occipital pole.

The protein resides in the cell membrane. Its subcellular location is the secreted. Functionally, may play a role in cell-cell and cell-matrix interactions. This is a non-catalytic metalloprotease-like protein. The protein is Disintegrin and metalloproteinase domain-containing protein 23 (ADAM23) of Homo sapiens (Human).